We begin with the raw amino-acid sequence, 117 residues long: Structural toxin peptide sea anemone type 9a (117 aa).

Residues 1-23 form the signal peptide; that stretch reads MKTIIAIFSLAAMIVLVRPTPLE. 3 tandem repeats follow at residues 28–56, 57–88, and 89–117. The 3 X approximate tandem repeats stretch occupies residues 29-117; that stretch reads RSIINVPCKK…GKCRKIHGCS (89 aa).

Post-translationally, contains 6 disulfide bonds. As to expression, expressed outside of acontia.

Its subcellular location is the secreted. The protein resides in the nematocyst. In terms of biological role, putative neurotoxin. This Calliactis polypus (Hermit crab anemone) protein is Structural toxin peptide sea anemone type 9a.